A 329-amino-acid polypeptide reads, in one-letter code: Fructose-1,6-bisphosphatase class 1 (329 aa).

4 residues coordinate Mg(2+): E84, D103, L105, and D106. Substrate is bound by residues 106–109 (DGSS), N196, and K262. E268 provides a ligand contact to Mg(2+).

It belongs to the FBPase class 1 family. In terms of assembly, homotetramer. The cofactor is Mg(2+).

The protein resides in the cytoplasm. The catalysed reaction is beta-D-fructose 1,6-bisphosphate + H2O = beta-D-fructose 6-phosphate + phosphate. It functions in the pathway carbohydrate biosynthesis; gluconeogenesis. This chain is Fructose-1,6-bisphosphatase class 1, found in Shewanella sediminis (strain HAW-EB3).